The primary structure comprises 150 residues: Large ribosomal subunit protein bL9 (150 aa).

Belongs to the bacterial ribosomal protein bL9 family.

Functionally, binds to the 23S rRNA. This chain is Large ribosomal subunit protein bL9, found in Streptococcus agalactiae serotype Ia (strain ATCC 27591 / A909 / CDC SS700).